We begin with the raw amino-acid sequence, 142 residues long: Crustacean hyperglycemic hormones (142 aa).

The signal sequence occupies residues 1-26; it reads MYSKTIPAMLAIITVAYLCALPHAHA. Position 67 is a pyrrolidone carboxylic acid; partial (Q67). Disulfide bonds link C73/C109, C89/C105, and C92/C118. Position 138 is a valine amide (V138).

It belongs to the arthropod CHH/MIH/GIH/VIH hormone family. The N-terminus is blocked only in isoform CHH-II but not in isoform CHH-I. As to expression, produced by the medulla terminalis X-organ in the eyestalks and transported to the sinus gland where they are stored and released.

The protein localises to the secreted. Hormone found in the sinus gland of isopods and decapods which controls the blood sugar level. Has a secretagogue action over the amylase released from the midgut gland. May act as a stress hormone and may be involved in the control of molting and reproduction. This is Crustacean hyperglycemic hormones from Carcinus maenas (Common shore crab).